The following is a 162-amino-acid chain: Protein A49 (162 aa).

Belongs to the poxviridae A49 protein family.

The polypeptide is Protein A49 (Variola virus (isolate Human/India/Ind3/1967) (VARV)).